The chain runs to 346 residues: Ferredoxin--NADP reductase (346 aa).

FAD-binding residues include Glu-35, Gln-43, Tyr-48, Val-88, Phe-122, Asp-287, and Thr-327.

It belongs to the ferredoxin--NADP reductase type 2 family. Homodimer. The cofactor is FAD.

The enzyme catalyses 2 reduced [2Fe-2S]-[ferredoxin] + NADP(+) + H(+) = 2 oxidized [2Fe-2S]-[ferredoxin] + NADPH. This is Ferredoxin--NADP reductase from Oenococcus oeni (strain ATCC BAA-331 / PSU-1).